A 378-amino-acid chain; its full sequence is MAGFTMSLNLLLLVAMVATNILSLYHLSSTTNFFQSTVKSSQSSVPTVPDHLLRQLHTIRAAINHLTTHQPDKSTSTSTSRAAVSSSSSSTAPKELLIYSKLSPIASACHNYPDLLHEYMNYTPFSLCPSDTDLVEKLILRGCHPLPRRRCFSRTPRNPSDSKPESNVLWSYYSCKSFDCLITKFSDLGFDLSLEKSKSQFSAYKSELDLPISQLLQIAKSANSVLRLGIDVGGGTGSFAAAMKARNVTVLTTTMNFNAPYSEAVAMRGLVPLHVPLQQRLPVFDGVVDLVRCGRAVNRWIPVTVMEFFFFDLDRILRGGGYLWLDRFFSKKVDLENVYAPMIGKLGYKKVKWAVANKADSKHGEVFLTALLQKPVAR.

At 1–6 the chain is on the cytoplasmic side; it reads MAGFTM. The chain crosses the membrane as a helical; Signal-anchor for type II membrane protein span at residues 7-29; the sequence is SLNLLLLVAMVATNILSLYHLSS. Over 30–378 the chain is Lumenal; sequence TTNFFQSTVK…TALLQKPVAR (349 aa). The segment at 67 to 87 is disordered; the sequence is TTHQPDKSTSTSTSRAAVSSS. A compositionally biased stretch (low complexity) spans 74–87; it reads STSTSTSRAAVSSS. Asn-247 is a glycosylation site (N-linked (GlcNAc...) asparagine).

The protein belongs to the methyltransferase superfamily.

The protein resides in the golgi apparatus membrane. The protein is Probable methyltransferase At1g29790 of Arabidopsis thaliana (Mouse-ear cress).